Reading from the N-terminus, the 154-residue chain is UPF0225 protein Spro_2712 (154 aa).

Belongs to the UPF0225 family.

The protein is UPF0225 protein Spro_2712 of Serratia proteamaculans (strain 568).